Consider the following 452-residue polypeptide: MKETQNAREKIKQLLHILIPIFITQAGLSLITFLDTVMSGKVSPADLAGVAIGSSLWTPVYTGLAGILMAVTPIVAQLLGAEKKQKIPFTVLQAVYVAALLSIAVLVIGYAAVDLILGRLNLDIHVHQIAKHFLGFLSLGIFPLFVYTVLRSFIDSLGKTRVTMMITLSSLPINFVLNYVFIFGKFGMPALGGVGAGLASALTYWCICIISFFIIHKNAPFSEYGIFLTMYKFSWKACKNLLKIGLPIGFAVFFETSIFAAVTLLMSHFHTVTIASHQAAMNFASLLYMLPLSVSMALTIVVGFEAGAARFKDARSYSLIGIMMAIGFSLFTAACILLFREQIAGMYTSDPDVLRLTQHFLIYALFFQLSDAVAAPIQGALRGYKDVNYTLAAAFVSYWVIGLPVGYMVGTFTSLGAFGYWIGLIAGLAAGAVGLFFRLAKLQKRYSQKQHI.

12 helical membrane-spanning segments follow: residues L14–L34, L56–A76, V97–L117, I129–V149, M164–G184, G195–I215, I244–L264, A284–F304, L319–F339, F360–A380, A392–F412, and A417–F437.

The protein belongs to the multi antimicrobial extrusion (MATE) (TC 2.A.66.1) family.

It localises to the cell membrane. Functionally, multidrug efflux pump. The protein is Probable multidrug resistance protein NorM (norM) of Bacillus subtilis (strain 168).